A 544-amino-acid polypeptide reads, in one-letter code: Membrane protein insertase YidC (544 aa).

5 helical membrane passes run Leu15 to Phe35, Leu321 to Pro341, Trp343 to Phe363, Leu409 to Val429, and Met506 to Ile526.

It belongs to the OXA1/ALB3/YidC family. Type 1 subfamily. In terms of assembly, interacts with the Sec translocase complex via SecD. Specifically interacts with transmembrane segments of nascent integral membrane proteins during membrane integration.

Its subcellular location is the cell inner membrane. In terms of biological role, required for the insertion and/or proper folding and/or complex formation of integral membrane proteins into the membrane. Involved in integration of membrane proteins that insert both dependently and independently of the Sec translocase complex, as well as at least some lipoproteins. Aids folding of multispanning membrane proteins. This is Membrane protein insertase YidC from Borrelia garinii subsp. bavariensis (strain ATCC BAA-2496 / DSM 23469 / PBi) (Borreliella bavariensis).